We begin with the raw amino-acid sequence, 183 residues long: Protein vem-1 (183 aa).

The helical transmembrane segment at 9 to 29 threads the bilayer; the sequence is FTMYDAVFLVVVLGFFFYWLT. The region spanning 47–146 is the Cytochrome b5 heme-binding domain; that stretch reads MSDMTVEELR…FKYLTVGRLV (100 aa).

It belongs to the cytochrome b5 family. MAPR subfamily. As to quaternary structure, interacts with unc-40 (via cytoplasmic domain). Expressed in the AVG pioneer midline neuron and in several nerve ring neurons that extend projecting axons into the right ventral nerve cord.

Its subcellular location is the membrane. It is found in the cell projection. The protein resides in the axon. Transmembrane protein required for the axon guidance of a subset of ventral nerve cord-associated interneurons and motor neurons. May function with the netrin receptor unc-40 in axon guidance. In Caenorhabditis elegans, this protein is Protein vem-1.